Consider the following 274-residue polypeptide: MPELPEVETVRRGLNRLVSGATIASIEVFWPKIINNDVDSFKQRLANQTIQTIDRRGKYLLFRFSNGLTMVSHLRMEGKYNVVPRGEDQGKHTHVIFHLTDDRDLLYNDTRKFGRMTLVPTGEENTVAGLRTIGPEPVAEQLTLAYMTATFGKSKKMIKPLLLDQSKIAGIGNIYADETLWMSKIHPMRPANSLTTDEIATLRQNIIDEMAMAIKGHGTTVHSFSTAFGEAGQFQNHLHVYGREGEPCERCGTIIEKIKVAQRGTHFCPLEQRL.

Catalysis depends on P2, which acts as the Schiff-base intermediate with DNA. The active-site Proton donor is E3. Residue K58 is the Proton donor; for beta-elimination activity of the active site. Residues H92 and R111 each contribute to the DNA site. Residues 239–273 form an FPG-type; degenerate zinc finger; it reads HVYGREGEPCERCGTIIEKIKVAQRGTHFCPLEQR. Residue R263 is the Proton donor; for delta-elimination activity of the active site.

Belongs to the FPG family. Monomer. The cofactor is Zn(2+).

It carries out the reaction Hydrolysis of DNA containing ring-opened 7-methylguanine residues, releasing 2,6-diamino-4-hydroxy-5-(N-methyl)formamidopyrimidine.. The enzyme catalyses 2'-deoxyribonucleotide-(2'-deoxyribose 5'-phosphate)-2'-deoxyribonucleotide-DNA = a 3'-end 2'-deoxyribonucleotide-(2,3-dehydro-2,3-deoxyribose 5'-phosphate)-DNA + a 5'-end 5'-phospho-2'-deoxyribonucleoside-DNA + H(+). Involved in base excision repair of DNA damaged by oxidation or by mutagenic agents. Acts as a DNA glycosylase that recognizes and removes damaged bases. Has a preference for oxidized purines, such as 7,8-dihydro-8-oxoguanine (8-oxoG). Has AP (apurinic/apyrimidinic) lyase activity and introduces nicks in the DNA strand. Cleaves the DNA backbone by beta-delta elimination to generate a single-strand break at the site of the removed base with both 3'- and 5'-phosphates. This is Formamidopyrimidine-DNA glycosylase from Lactiplantibacillus plantarum (strain ATCC BAA-793 / NCIMB 8826 / WCFS1) (Lactobacillus plantarum).